The primary structure comprises 1116 residues: Error-prone DNA polymerase 1 (1116 aa).

This sequence belongs to the DNA polymerase type-C family. DnaE2 subfamily.

The protein localises to the cytoplasm. It carries out the reaction DNA(n) + a 2'-deoxyribonucleoside 5'-triphosphate = DNA(n+1) + diphosphate. DNA polymerase involved in damage-induced mutagenesis and translesion synthesis (TLS). It is not the major replicative DNA polymerase. The chain is Error-prone DNA polymerase 1 from Rhizobium meliloti (strain 1021) (Ensifer meliloti).